An 894-amino-acid chain; its full sequence is Transcriptional activator/repressor GIS1 (894 aa).

The 42-residue stretch at 12–53 (VPVFKPSMMEFANFQYFIDEITKFGIENGIVKVIPPKEWLEL) folds into the JmjN domain. S70 is subject to Phosphoserine. A coiled-coil region spans residues 90-110 (ENEYDNKSYNLTQWKNLAESL). One can recognise a JmjC domain in the interval 170-324 (PYDLTLWNLN…VRKQPLKCGC (155 aa)). Positions 316 to 332 (RKQPLKCGCGNKKEERK) match the Bipartite nuclear localization signal motif. Positions 324–355 (CGNKKEERKSGPFSNLSYDSNESEQRGSITDN) are disordered. Polar residues predominate over residues 335-354 (PFSNLSYDSNESEQRGSITD). S343 is modified (phosphoserine). The stretch at 361-385 (QKVRSFDELLNHSSQELQNLEDNKN) forms a coiled coil. A compositionally biased stretch (low complexity) spans 521–554 (NISSTNNSANNSSSNNNVSTVPSSMMHSSTLNGT). The segment at 521–558 (NISSTNNSANNSSSNNNVSTVPSSMMHSSTLNGTSGLG) is disordered. S690, S694, S696, S734, and S747 each carry phosphoserine. Over residues 756–768 (LNGNDNSNLDSNN) the composition is skewed to low complexity. The interval 756-810 (LNGNDNSNLDSNNFDYSFTGNKQESNPSILNNNTNNNDNYRTSSMNNNGNNYQAH) is disordered. Polar residues-rich tracts occupy residues 769 to 785 (FDYS…PSIL) and 795 to 810 (YRTS…YQAH). The C2H2-type 1 zinc finger occupies 828–851 (YICRECNRQFSSGHHLTRHKKSVH). The C2H2-type 2; atypical zinc finger occupies 857–882 (HSCPRCGKRFKRRDHVLQHLNKKIPC).

Its subcellular location is the nucleus. In terms of biological role, transcription factor involved in the regulation of gene expression upon nutrient starvation. Recognizes and binds to the post-diauxic-shift element 5'-T[AT]AGGGAT-3' in the promoter region. Can act as a transcriptional activator (e.g. of stress genes like SSA3, HSP12 and HSP26) as well as a repressor (e.g. of pyrophosphate phosphatase DPP1). GIS1 also acts as a DNA damage-responsive transcriptional repressor of photolyase PHR1. This chain is Transcriptional activator/repressor GIS1 (GIS1), found in Saccharomyces cerevisiae (strain ATCC 204508 / S288c) (Baker's yeast).